A 440-amino-acid polypeptide reads, in one-letter code: GTPase Der (440 aa).

2 consecutive EngA-type G domains span residues Pro4 to Lys168 and Ile177 to Ala352. Residues Gly10–Ser17, Asp57–Ile61, Asn120–Asp123, Gly183–Ser190, Asp230–Leu234, and Asn295–Asp298 each bind GTP. A KH-like domain is found at Met353 to Ser437.

It belongs to the TRAFAC class TrmE-Era-EngA-EngB-Septin-like GTPase superfamily. EngA (Der) GTPase family. In terms of assembly, associates with the 50S ribosomal subunit.

Functionally, GTPase that plays an essential role in the late steps of ribosome biogenesis. The chain is GTPase Der from Alkaliphilus metalliredigens (strain QYMF).